We begin with the raw amino-acid sequence, 507 residues long: tRNA (guanine(10)-N(2))-methyltransferase TRMT11 (507 aa).

Over residues 459–475 the composition is skewed to basic and acidic residues; sequence EKTKKKEQKKKSVENHL. The tract at residues 459 to 507 is disordered; it reads EKTKKKEQKKKSVENHLKSKNNNDVINNNSNDTNSNNNCNNENNIENQK. Low complexity predominate over residues 480-507; that stretch reads NNDVINNNSNDTNSNNNCNNENNIENQK.

The protein belongs to the class I-like SAM-binding methyltransferase superfamily. TRM11 methyltransferase family. Part of the heterodimeric TRMT11-TRM112 methyltransferase complex; this complex forms an active tRNA methyltransferase, where TRMT112 acts as an activator of the catalytic subunit TRMT11.

It localises to the cytoplasm. The enzyme catalyses guanosine(10) in tRNA + S-adenosyl-L-methionine = N(2)-methylguanosine(10) in tRNA + S-adenosyl-L-homocysteine + H(+). In terms of biological role, catalytic subunit of the TRMT11-TRM112 methyltransferase complex, that specifically mediates the S-adenosyl-L-methionine-dependent N(2)-methylation of guanosine nucleotide at position 10 (m2G10) in tRNAs. This is one of the major tRNA (guanine-N(2))-methyltransferases. This is tRNA (guanine(10)-N(2))-methyltransferase TRMT11 (trmt11) from Dictyostelium discoideum (Social amoeba).